Reading from the N-terminus, the 284-residue chain is Avenin-like b5 (284 aa).

Positions 1 to 18 (MKVFILALLALTATTAIA) are cleaved as a signal peptide.

It belongs to the prolamin family. Contains disulfide bonds. In terms of tissue distribution, expressed only in developing endosperms. Not detected in roots, stems or leaves.

In terms of biological role, seed storage protein. Might be integrated via inter-chain disulfide bonds within the glutenin polymer. The chain is Avenin-like b5 from Triticum aestivum (Wheat).